Consider the following 122-residue polypeptide: Large ribosomal subunit protein bL12 (122 aa).

Belongs to the bacterial ribosomal protein bL12 family. As to quaternary structure, homodimer. Part of the ribosomal stalk of the 50S ribosomal subunit. Forms a multimeric L10(L12)X complex, where L10 forms an elongated spine to which 2 to 4 L12 dimers bind in a sequential fashion. Binds GTP-bound translation factors.

In terms of biological role, forms part of the ribosomal stalk which helps the ribosome interact with GTP-bound translation factors. Is thus essential for accurate translation. The chain is Large ribosomal subunit protein bL12 from Pseudomonas aeruginosa (strain LESB58).